A 682-amino-acid polypeptide reads, in one-letter code: Inactive protein-arginine deiminase type-6 (682 aa).

2 positions are modified to phosphoserine: Ser-2 and Ser-434.

The protein belongs to the protein arginine deiminase family. Homodimers. Associates with alpha-tubulin. In terms of processing, phosphorylation at Ser-2, possibly by RSK-type kinases, and Ser-434 creates binding sites for 14-3-3 proteins. As to expression, expressed at very high levels in oocytes. Weakly expressed in testis. Expressed in primordial, primary, secondary and Graafian follicles, and in immature oocytes, mature eggs and blastocyst (at protein level).

The protein resides in the cytoplasm. It localises to the nucleus. The protein localises to the cytoplasmic vesicle. Its subcellular location is the secretory vesicle. It is found in the cortical granule. In terms of biological role, structural constituent of cytoplasmic lattices, which plays a key role in early embryonic development. Cytoplasmic lattices consist in fibrous structures found in the cytoplasm of oocytes and preimplantation embryos. They are required to store maternal proteins critical for embryonic development, such as ribosomal proteins and proteins that control epigenetic reprogramming of the preimplantation embryo, and prevent their degradation or activation. In contrast to other members of the family, does not show protein-arginine deiminase activity due to its inability to bind Ca(2+). In Mus musculus (Mouse), this protein is Inactive protein-arginine deiminase type-6.